Here is a 430-residue protein sequence, read N- to C-terminus: MAARLLLRSLRVLSARSATLPPPSARCSHSGAEARLETPSAKKLTDIGIRRIFSSEHDIFRESVRKFFQEEVIPYHEEWEKAGEVSRELWEKAGKQGLLGINIAEKHGGIGGDLLSTAVTWEEQAYSNCTGPGFSLHSDIVMPYIANYGTKEQIEQFIPQMTAGKCIGAIAMTEPGAGSDLQGVRTNAKRSGSDWILNGSKVFITNGWLSDLVIVVAVTNREARSPAHGISLFLVENGMKGFIKGKKLHKMGMKAQDTAELFFEDVRLPASALLGEENKGFYYLMQELPQERLLIADLAISACEFMFEETRNYVRQRKAFGKTVAHIQTVQHKLAELKTNICVTRAFVDSCLQLHETKRLDSASASMAKYWASELQNTVAYQCVQLHGGWGYMWEYPIAKAYVDARVQPIYGGTNEIMKELIARQIVSDS.

The transit peptide at 1–30 (MAARLLLRSLRVLSARSATLPPPSARCSHS) directs the protein to the mitochondrion. Lys42 carries the N6-acetyllysine modification. Residues Ser54 and Ser55 each carry the phosphoserine modification. N6-acetyllysine; alternate occurs at positions 66 and 81. N6-succinyllysine; alternate occurs at positions 66 and 81. Lys92 and Lys95 each carry N6-acetyllysine. The residue at position 165 (Lys165) is an N6-succinyllysine. 170-179 (IAMTEPGAGS) lines the FAD pocket. Ser179 contributes to the substrate binding site. Phosphoserine is present on Ser191. 203 to 205 (FIT) is a binding site for FAD. 227 to 228 (AH) contacts substrate. Lys240 carries the N6-succinyllysine modification. 2 positions are modified to N6-acetyllysine; alternate: Lys254 and Lys279. 2 positions are modified to N6-succinyllysine; alternate: Lys254 and Lys279. Residues Tyr282 and 289-292 (PQER) contribute to the substrate site. Catalysis depends on Glu291, which acts as the Proton acceptor. Arg317 lines the FAD pocket. Lys318 bears the N6-acetyllysine mark. Position 322 is an N6-acetyllysine; alternate (Lys322). Residue Lys322 is modified to N6-succinyllysine; alternate. Gln328 lines the FAD pocket. The residue at position 358 (Lys358) is an N6-acetyllysine. Ser362 is subject to Phosphoserine. 385 to 389 (QLHGG) is an FAD binding site. Substrate is bound at residue 412–413 (GG). Residue 414–416 (TNE) participates in FAD binding.

Belongs to the acyl-CoA dehydrogenase family. Homotetramer. FAD serves as cofactor. Post-translationally, acetylation at Lys-318 and Lys-322 in proximity of the cofactor-binding sites strongly reduces catalytic activity. These sites are deacetylated by SIRT3.

The protein resides in the mitochondrion matrix. The catalysed reaction is a long-chain 2,3-saturated fatty acyl-CoA + oxidized [electron-transfer flavoprotein] + H(+) = a long-chain (2E)-enoyl-CoA + reduced [electron-transfer flavoprotein]. It carries out the reaction octanoyl-CoA + oxidized [electron-transfer flavoprotein] + H(+) = (2E)-octenoyl-CoA + reduced [electron-transfer flavoprotein]. The enzyme catalyses decanoyl-CoA + oxidized [electron-transfer flavoprotein] + H(+) = (2E)-decenoyl-CoA + reduced [electron-transfer flavoprotein]. It catalyses the reaction dodecanoyl-CoA + oxidized [electron-transfer flavoprotein] + H(+) = (2E)-dodecenoyl-CoA + reduced [electron-transfer flavoprotein]. The catalysed reaction is tetradecanoyl-CoA + oxidized [electron-transfer flavoprotein] + H(+) = (2E)-tetradecenoyl-CoA + reduced [electron-transfer flavoprotein]. It carries out the reaction oxidized [electron-transfer flavoprotein] + hexadecanoyl-CoA + H(+) = (2E)-hexadecenoyl-CoA + reduced [electron-transfer flavoprotein]. The enzyme catalyses octadecanoyl-CoA + oxidized [electron-transfer flavoprotein] + H(+) = (2E)-octadecenoyl-CoA + reduced [electron-transfer flavoprotein]. It catalyses the reaction (5E)-tetradecenoyl-CoA + oxidized [electron-transfer flavoprotein] + H(+) = (2E,5E)-tetradecadienoyl-CoA + reduced [electron-transfer flavoprotein]. The catalysed reaction is (5Z)-tetradecenoyl-CoA + oxidized [electron-transfer flavoprotein] + H(+) = (2E,5Z)-tetradecadienoyl-CoA + reduced [electron-transfer flavoprotein]. It carries out the reaction oxidized [electron-transfer flavoprotein] + (9Z)-octadecenoyl-CoA + H(+) = (2E,9Z)-octadecadienoyl-CoA + reduced [electron-transfer flavoprotein]. The enzyme catalyses hexanoyl-CoA + oxidized [electron-transfer flavoprotein] + H(+) = (2E)-hexenoyl-CoA + reduced [electron-transfer flavoprotein]. It catalyses the reaction eicosanoyl-CoA + oxidized [electron-transfer flavoprotein] + H(+) = (2E)-eicosenoyl-CoA + reduced [electron-transfer flavoprotein]. The catalysed reaction is docosanoyl-CoA + oxidized [electron-transfer flavoprotein] + H(+) = (2E)-docosenoyl-CoA + reduced [electron-transfer flavoprotein]. It carries out the reaction tetracosanoyl-CoA + oxidized [electron-transfer flavoprotein] + H(+) = (2E)-tetracosenoyl-CoA + reduced [electron-transfer flavoprotein]. Its pathway is lipid metabolism; mitochondrial fatty acid beta-oxidation. Inhibited by crotonyl-CoA, 2-octenoyl-CoA and 2-hexadecenoyl-CoA. Functionally, long-chain specific acyl-CoA dehydrogenase is one of the acyl-CoA dehydrogenases that catalyze the first step of mitochondrial fatty acid beta-oxidation, an aerobic process breaking down fatty acids into acetyl-CoA and allowing the production of energy from fats. The first step of fatty acid beta-oxidation consists in the removal of one hydrogen from C-2 and C-3 of the straight-chain fatty acyl-CoA thioester, resulting in the formation of trans-2-enoyl-CoA. Among the different mitochondrial acyl-CoA dehydrogenases, long-chain specific acyl-CoA dehydrogenase can act on saturated and unsaturated acyl-CoAs with 6 to 24 carbons with a preference for 8 to 18 carbons long primary chains. The sequence is that of Long-chain specific acyl-CoA dehydrogenase, mitochondrial from Rattus norvegicus (Rat).